Consider the following 638-residue polypeptide: Chaperone protein DnaK (638 aa).

Threonine 199 carries the phosphothreonine; by autocatalysis modification. A compositionally biased stretch (low complexity) spans 603 to 618; the sequence is YAQPGAEAGAEQQGSA. The tract at residues 603 to 638 is disordered; it reads YAQPGAEAGAEQQGSANNADDDIVDAEFEEVNDDKK. A compositionally biased stretch (acidic residues) spans 621 to 638; it reads ADDDIVDAEFEEVNDDKK.

It belongs to the heat shock protein 70 family.

Functionally, acts as a chaperone. In Hydrogenovibrio crunogenus (strain DSM 25203 / XCL-2) (Thiomicrospira crunogena), this protein is Chaperone protein DnaK.